Here is a 61-residue protein sequence, read N- to C-terminus: Large ribosomal subunit protein bL28 (61 aa).

It belongs to the bacterial ribosomal protein bL28 family.

The sequence is that of Large ribosomal subunit protein bL28 from Geobacillus sp. (strain WCH70).